Here is a 163-residue protein sequence, read N- to C-terminus: Cytochrome c-type biogenesis protein CcmE (163 aa).

Residues 1–8 (MNPRRKKR) are Cytoplasmic-facing. The helical; Signal-anchor for type II membrane protein transmembrane segment at 9 to 29 (LTLAVALIVGVAGAASLLLYA) threads the bilayer. The Periplasmic segment spans residues 30-163 (LNSNLNLFYT…QEGVEKTAQY (134 aa)). Heme-binding residues include His131 and Tyr135.

The protein belongs to the CcmE/CycJ family.

It localises to the cell inner membrane. Functionally, heme chaperone required for the biogenesis of c-type cytochromes. Transiently binds heme delivered by CcmC and transfers the heme to apo-cytochromes in a process facilitated by CcmF and CcmH. The sequence is that of Cytochrome c-type biogenesis protein CcmE from Shewanella denitrificans (strain OS217 / ATCC BAA-1090 / DSM 15013).